Here is a 121-residue protein sequence, read N- to C-terminus: Large ribosomal subunit protein uL18 (121 aa).

Belongs to the universal ribosomal protein uL18 family. As to quaternary structure, part of the 50S ribosomal subunit; part of the 5S rRNA/L5/L18/L25 subcomplex. Contacts the 5S and 23S rRNAs.

Its function is as follows. This is one of the proteins that bind and probably mediate the attachment of the 5S RNA into the large ribosomal subunit, where it forms part of the central protuberance. In Streptococcus thermophilus (strain CNRZ 1066), this protein is Large ribosomal subunit protein uL18.